Here is a 397-residue protein sequence, read N- to C-terminus: Major outer membrane porin, serovar C (397 aa).

Positions 1-22 (MKKLLKSVLVFAALSSASSLQA) are cleaved as a signal peptide.

The protein belongs to the chlamydial porin (CP) (TC 1.B.2) family. As to quaternary structure, part of a disulfide cross-linked outer membrane complex (COMC) composed of the major outer membrane porin (MOMP), the small cysteine-rich protein (OmcA) and the large cysteine-rich periplasmic protein (OmcB).

It is found in the cell outer membrane. Its function is as follows. In elementary bodies (EBs, the infectious stage, which is able to survive outside the host cell) provides the structural integrity of the outer envelope through disulfide cross-links with the small cysteine-rich protein and the large cysteine-rich periplasmic protein. It has been described in publications as the Sarkosyl-insoluble COMC (Chlamydia outer membrane complex), and serves as the functional equivalent of peptidoglycan. Functionally, permits diffusion of specific solutes through the outer membrane. The chain is Major outer membrane porin, serovar C (ompA) from Chlamydia trachomatis.